We begin with the raw amino-acid sequence, 222 residues long: Nucleoside triphosphate pyrophosphatase (222 aa).

D82 serves as the catalytic Proton acceptor.

The protein belongs to the Maf family. A divalent metal cation serves as cofactor.

Its subcellular location is the cytoplasm. The catalysed reaction is a ribonucleoside 5'-triphosphate + H2O = a ribonucleoside 5'-phosphate + diphosphate + H(+). The enzyme catalyses a 2'-deoxyribonucleoside 5'-triphosphate + H2O = a 2'-deoxyribonucleoside 5'-phosphate + diphosphate + H(+). Its function is as follows. Nucleoside triphosphate pyrophosphatase. May have a dual role in cell division arrest and in preventing the incorporation of modified nucleotides into cellular nucleic acids. The chain is Nucleoside triphosphate pyrophosphatase from Mycobacterium tuberculosis (strain ATCC 25177 / H37Ra).